A 220-amino-acid polypeptide reads, in one-letter code: Small ribosomal subunit protein uS3c (220 aa).

In terms of domain architecture, KH type-2 spans 43–120; the sequence is IQHYVEKNTR…RLNIAIIRVA (78 aa).

It belongs to the universal ribosomal protein uS3 family. As to quaternary structure, part of the 30S ribosomal subunit.

Its subcellular location is the plastid. It localises to the chloroplast. This chain is Small ribosomal subunit protein uS3c (rps3), found in Piper cenocladum (Ant piper).